The sequence spans 616 residues: Probable Xaa-Pro aminopeptidase P (616 aa).

Residues Asp413, Asp424, Glu522, and Glu536 each contribute to the Mn(2+) site.

It belongs to the peptidase M24B family. The cofactor is Mn(2+).

It catalyses the reaction Release of any N-terminal amino acid, including proline, that is linked to proline, even from a dipeptide or tripeptide.. Its function is as follows. Catalyzes the removal of a penultimate prolyl residue from the N-termini of peptides. The sequence is that of Probable Xaa-Pro aminopeptidase P (AMPP) from Paracoccidioides brasiliensis (strain Pb18).